The chain runs to 215 residues: 3-isopropylmalate dehydratase small subunit (215 aa).

The protein belongs to the LeuD family. LeuD type 1 subfamily. Heterodimer of LeuC and LeuD.

It catalyses the reaction (2R,3S)-3-isopropylmalate = (2S)-2-isopropylmalate. It functions in the pathway amino-acid biosynthesis; L-leucine biosynthesis; L-leucine from 3-methyl-2-oxobutanoate: step 2/4. In terms of biological role, catalyzes the isomerization between 2-isopropylmalate and 3-isopropylmalate, via the formation of 2-isopropylmaleate. The protein is 3-isopropylmalate dehydratase small subunit of Ectopseudomonas mendocina (strain ymp) (Pseudomonas mendocina).